The chain runs to 276 residues: Type II pantothenate kinase (276 aa).

8–15 contacts ATP; the sequence is DAGGTLTK. E76 acts as the Proton acceptor in catalysis. ATP contacts are provided by residues T105, 127 to 131, F143, and S230; that span reads GGTIM.

This sequence belongs to the type II pantothenate kinase family. Homodimer.

The protein localises to the cytoplasm. It catalyses the reaction (R)-pantothenate + ATP = (R)-4'-phosphopantothenate + ADP + H(+). The protein operates within cofactor biosynthesis; coenzyme A biosynthesis; CoA from (R)-pantothenate: step 1/5. Functionally, catalyzes the phosphorylation of pantothenate (Pan), the first step in CoA biosynthesis. This chain is Type II pantothenate kinase, found in Bacillus cereus (strain ZK / E33L).